We begin with the raw amino-acid sequence, 236 residues long: V-set and transmembrane domain-containing protein 2A (236 aa).

The N-terminal stretch at 1–24 is a signal peptide; the sequence is MMGIFLVYVGFVFFSVLYVQQGLS. Residues 27 to 143 form the Ig-like V-type domain; it reads AKFTEFPRNV…YGELQEHKAQ (117 aa). Asn35 carries an N-linked (GlcNAc...) asparagine glycan. Residues Cys48 and Cys127 are joined by a disulfide bond. An N-linked (GlcNAc...) asparagine glycan is attached at Asn175. The segment covering 184 to 199 has biased composition (polar residues); it reads IHGSANQRTHSTSSPQ. Residues 184–206 form a disordered region; the sequence is IHGSANQRTHSTSSPQVVAKIPK.

In terms of assembly, homodimer. In terms of processing, N-glycosylated. N-linked glycosylation is critical for secretion but not for preadipocyte cell differentiation activity.

It is found in the secreted. Functionally, plays a role in the regulation of the early stage of white and brown preadipocyte cell differentiation. Promotes adipogenic commitment of preadipocytes by increasing gene expression of the transcription factor PPARG in a BMP4-dependent signaling pathway. This chain is V-set and transmembrane domain-containing protein 2A, found in Homo sapiens (Human).